The following is a 515-amino-acid chain: Chromosomal replication initiator protein DnaA (515 aa).

Residues 1-89 are domain I, interacts with DnaA modulators; sequence MVADQAVLSS…LLAISIDANL (89 aa). The tract at residues 89–172 is domain II; sequence LQPPRTPSSE…APPSTSAETS (84 aa). Disordered stretches follow at residues 90 to 130 and 142 to 171; these read QPPR…SRRA and PPAD…SAET. 2 stretches are compositionally biased toward low complexity: residues 102-114 and 143-160; these read SSLA…AAAP and PADV…NGKP. The domain III, AAA+ region stretch occupies residues 173 to 389; the sequence is RLNDRYHFET…GALIRVTAFA (217 aa). G217, G219, K220, and T221 together coordinate ATP. The segment at 390–515 is domain IV, binds dsDNA; sequence SLNRQTVDIE…NEIKRKQRGA (126 aa).

The protein belongs to the DnaA family. In terms of assembly, oligomerizes as a right-handed, spiral filament on DNA at oriC.

The protein resides in the cytoplasm. Plays an essential role in the initiation and regulation of chromosomal replication. ATP-DnaA binds to the origin of replication (oriC) to initiate formation of the DNA replication initiation complex once per cell cycle. Binds the DnaA box (a 9 base pair repeat at the origin) and separates the double-stranded (ds)DNA. Forms a right-handed helical filament on oriC DNA; dsDNA binds to the exterior of the filament while single-stranded (ss)DNA is stabiized in the filament's interior. The ATP-DnaA-oriC complex binds and stabilizes one strand of the AT-rich DNA unwinding element (DUE), permitting loading of DNA polymerase. After initiation quickly degrades to an ADP-DnaA complex that is not apt for DNA replication. Binds acidic phospholipids. This Micrococcus luteus (strain ATCC 4698 / DSM 20030 / JCM 1464 / CCM 169 / CCUG 5858 / IAM 1056 / NBRC 3333 / NCIMB 9278 / NCTC 2665 / VKM Ac-2230) (Micrococcus lysodeikticus) protein is Chromosomal replication initiator protein DnaA.